Consider the following 269-residue polypeptide: Seven in absentia homolog 3 (269 aa).

The SIAH-type; degenerate zinc finger occupies 61–132; the sequence is GSFHPHHLSH…VVPHLRQIHR (72 aa). Zn(2+) is bound by residues Cys-107, Cys-114, His-126, and His-131.

Belongs to the SINA (Seven in absentia) family.

The protein resides in the mitochondrion. Functionally, negative regulator of PRKN translocation to damaged mitochondria. Acts probably by destabilizing PINK1 protein, hence inhibiting PRKN targeting to dysfunctional depolarized mitochondria. This is Seven in absentia homolog 3 (SIAH3) from Homo sapiens (Human).